A 205-amino-acid chain; its full sequence is NADH-quinone oxidoreductase subunit C (205 aa).

This sequence belongs to the complex I 30 kDa subunit family. As to quaternary structure, NDH-1 is composed of 14 different subunits. Subunits NuoB, C, D, E, F, and G constitute the peripheral sector of the complex.

The protein localises to the cell inner membrane. It catalyses the reaction a quinone + NADH + 5 H(+)(in) = a quinol + NAD(+) + 4 H(+)(out). In terms of biological role, NDH-1 shuttles electrons from NADH, via FMN and iron-sulfur (Fe-S) centers, to quinones in the respiratory chain. The immediate electron acceptor for the enzyme in this species is believed to be ubiquinone. Couples the redox reaction to proton translocation (for every two electrons transferred, four hydrogen ions are translocated across the cytoplasmic membrane), and thus conserves the redox energy in a proton gradient. The chain is NADH-quinone oxidoreductase subunit C from Bartonella bacilliformis (strain ATCC 35685 / KC583 / Herrer 020/F12,63).